A 242-amino-acid polypeptide reads, in one-letter code: Biosynthetic peptidoglycan transglycosylase (242 aa).

The chain crosses the membrane as a helical span at residues 18 to 38; sequence VIMAVLCIAILYQLWMFSLVV.

The protein belongs to the glycosyltransferase 51 family.

The protein localises to the cell inner membrane. It carries out the reaction [GlcNAc-(1-&gt;4)-Mur2Ac(oyl-L-Ala-gamma-D-Glu-L-Lys-D-Ala-D-Ala)](n)-di-trans,octa-cis-undecaprenyl diphosphate + beta-D-GlcNAc-(1-&gt;4)-Mur2Ac(oyl-L-Ala-gamma-D-Glu-L-Lys-D-Ala-D-Ala)-di-trans,octa-cis-undecaprenyl diphosphate = [GlcNAc-(1-&gt;4)-Mur2Ac(oyl-L-Ala-gamma-D-Glu-L-Lys-D-Ala-D-Ala)](n+1)-di-trans,octa-cis-undecaprenyl diphosphate + di-trans,octa-cis-undecaprenyl diphosphate + H(+). Its pathway is cell wall biogenesis; peptidoglycan biosynthesis. Its function is as follows. Peptidoglycan polymerase that catalyzes glycan chain elongation from lipid-linked precursors. The polypeptide is Biosynthetic peptidoglycan transglycosylase (Bordetella bronchiseptica (strain ATCC BAA-588 / NCTC 13252 / RB50) (Alcaligenes bronchisepticus)).